The chain runs to 127 residues: Small ribosomal subunit protein uS11 (127 aa).

Belongs to the universal ribosomal protein uS11 family. As to quaternary structure, part of the 30S ribosomal subunit. Interacts with proteins S7 and S18. Binds to IF-3.

Functionally, located on the platform of the 30S subunit, it bridges several disparate RNA helices of the 16S rRNA. Forms part of the Shine-Dalgarno cleft in the 70S ribosome. In Rickettsia africae (strain ESF-5), this protein is Small ribosomal subunit protein uS11.